A 612-amino-acid polypeptide reads, in one-letter code: Phosphopentomutase (612 aa).

Position 2 is an N-acetylalanine (Ala-2). Positions 63 and 165 each coordinate alpha-D-glucose 1,6-bisphosphate. Catalysis depends on Ser-165, which acts as the Phosphoserine intermediate. Residues Ser-165, Asp-322, Asp-324, and Asp-326 each contribute to the Mg(2+) site. Ser-165 is modified (phosphoserine). Asp-326, Arg-327, Thr-400, Glu-424, and Lys-438 together coordinate alpha-D-glucose 1,6-bisphosphate.

Belongs to the phosphohexose mutase family. As to quaternary structure, monomer. Requires Mg(2+) as cofactor.

It localises to the cytoplasm. It is found in the cytosol. It carries out the reaction alpha-D-ribose 1-phosphate = D-ribose 5-phosphate. The enzyme catalyses 2-deoxy-alpha-D-ribose 1-phosphate = 2-deoxy-D-ribose 5-phosphate. It catalyses the reaction alpha-D-glucose 1-phosphate = alpha-D-glucose 6-phosphate. The catalysed reaction is O-phospho-L-seryl-[protein] + alpha-D-glucose 1-phosphate = alpha-D-glucose 1,6-bisphosphate + L-seryl-[protein]. It carries out the reaction alpha-D-glucose 1,6-bisphosphate + L-seryl-[protein] = O-phospho-L-seryl-[protein] + alpha-D-glucose 6-phosphate. The phosphomutase activity is stimulated by glucose 1,6-bisphosphate. Catalyzes the conversion of the nucleoside breakdown products ribose-1-phosphate and deoxyribose-1-phosphate to the corresponding 5-phosphopentoses. Catalyzes the reversible isomerization of alpha-D-glucose 1-phosphate to alpha-D-glucose 6-phosphate but with a lower catalytic efficiency. The mechanism proceeds via the intermediate compound alpha-D-glucose 1,6-bisphosphate. In vitro, also has a low glucose 1,6-bisphosphate synthase activity which is most probably not physiologically relevant. The chain is Phosphopentomutase from Homo sapiens (Human).